Here is a 467-residue protein sequence, read N- to C-terminus: ADAM DEC1 (467 aa).

Positions 1–33 (MLPGTSRLPTEASMSWVLLSVLWLIIQIQVIDA) are cleaved as a signal peptide. The propeptide occupies 34–208 (TLTPELKPHE…LRTSRSLKNP (175 aa)). N-linked (GlcNAc...) asparagine glycosylation is found at Asn-61 and Asn-236. Residues 217-411 (KYIGLFLVLD…RNARCLLLAP (195 aa)) form the Peptidase M12B domain. 2 cysteine pairs are disulfide-bonded: Cys-327–Cys-406 and Cys-368–Cys-373. His-351 provides a ligand contact to Zn(2+). The active site involves Glu-352. Zn(2+)-binding residues include His-355 and Asp-361. One can recognise a Disintegrin domain in the interval 418–467 (KPTCGNQVLDVGEECDCGSPEECTNLCCEPLTCRLKSQPDCSEASNHITE).

Requires Zn(2+) as cofactor. Expressed highly in uterus during pregnancy.

The protein localises to the secreted. May play an important role in the control of the immune response and during pregnancy. In Mus musculus (Mouse), this protein is ADAM DEC1 (Adamdec1).